Consider the following 360-residue polypeptide: Heat-inducible transcription repressor HrcA (360 aa).

The protein belongs to the HrcA family.

Its function is as follows. Negative regulator of class I heat shock genes (grpE-dnaK-dnaJ and groELS operons). Prevents heat-shock induction of these operons. The chain is Heat-inducible transcription repressor HrcA from Gloeobacter violaceus (strain ATCC 29082 / PCC 7421).